The following is a 215-amino-acid chain: Ribose-5-phosphate isomerase A (215 aa).

Substrate contacts are provided by residues 26-29, 79-82, and 92-95; these read TGST, DGAD, and KGGG. Glutamate 101 serves as the catalytic Proton acceptor. Residue lysine 119 participates in substrate binding.

It belongs to the ribose 5-phosphate isomerase family. Homodimer.

The enzyme catalyses aldehydo-D-ribose 5-phosphate = D-ribulose 5-phosphate. It participates in carbohydrate degradation; pentose phosphate pathway; D-ribose 5-phosphate from D-ribulose 5-phosphate (non-oxidative stage): step 1/1. Catalyzes the reversible conversion of ribose-5-phosphate to ribulose 5-phosphate. This is Ribose-5-phosphate isomerase A from Stenotrophomonas maltophilia (strain K279a).